Consider the following 123-residue polypeptide: Ribosome-binding factor A (123 aa).

This sequence belongs to the RbfA family. In terms of assembly, monomer. Binds 30S ribosomal subunits, but not 50S ribosomal subunits or 70S ribosomes.

Its subcellular location is the cytoplasm. In terms of biological role, one of several proteins that assist in the late maturation steps of the functional core of the 30S ribosomal subunit. Associates with free 30S ribosomal subunits (but not with 30S subunits that are part of 70S ribosomes or polysomes). Required for efficient processing of 16S rRNA. May interact with the 5'-terminal helix region of 16S rRNA. The protein is Ribosome-binding factor A of Legionella pneumophila (strain Lens).